Here is a 407-residue protein sequence, read N- to C-terminus: O-antigen polymerase (407 aa).

The next 11 helical transmembrane spans lie at 2 to 22 (LIIS…TLSV), 31 to 51 (VMVP…GIFV), 63 to 83 (YLFF…SYLY), 101 to 121 (YVFT…PVLM), 141 to 161 (YGIY…CAFF), 168 to 185 (LFCI…FLHG), 190 to 204 (IFSI…LSYI), 211 to 231 (FMFL…FFAY), 319 to 339 (ADFG…KGVL), 356 to 376 (FIMF…GWLF), and 382 to 402 (IAFM…RFVL).

Its subcellular location is the cell inner membrane. It carries out the reaction n lipid-linked O-antigen repeat units = a lipid-linked O antigen + (n-1) polyisoprenyl diphosphate.. It participates in bacterial outer membrane biogenesis; LPS O-antigen biosynthesis. Polymerase involved in the biosynthesis of the lipopolysaccharide (LPS). Catalyzes the polymerization of the O-antigen repeat units on the periplasmic face of the inner membrane, leading to the formation of the lipid-linked O-antigen molecule. In Salmonella typhi, this protein is O-antigen polymerase (rfc).